Reading from the N-terminus, the 360-residue chain is Molybdenum import ATP-binding protein ModC (360 aa).

Residues 5-234 (VKLHLGYQDF…LDLPLALGDD (230 aa)) enclose the ABC transporter domain. 32–39 (GHSGSGKT) is a binding site for ATP. Residues 295 to 360 (HSSILNRLPV…AQIKAVAVLA (66 aa)) form the Mop domain.

It belongs to the ABC transporter superfamily. Molybdate importer (TC 3.A.1.8) family. The complex is composed of two ATP-binding proteins (ModC), two transmembrane proteins (ModB) and a solute-binding protein (ModA).

Its subcellular location is the cell inner membrane. The catalysed reaction is molybdate(out) + ATP + H2O = molybdate(in) + ADP + phosphate + H(+). Its function is as follows. Part of the ABC transporter complex ModABC involved in molybdenum import. Responsible for energy coupling to the transport system. The polypeptide is Molybdenum import ATP-binding protein ModC (Pseudomonas fluorescens (strain ATCC BAA-477 / NRRL B-23932 / Pf-5)).